Consider the following 268-residue polypeptide: Ribosomal RNA small subunit methyltransferase A (268 aa).

Residues asparagine 18, leucine 20, glycine 45, glutamate 66, aspartate 91, and asparagine 112 each contribute to the S-adenosyl-L-methionine site.

It belongs to the class I-like SAM-binding methyltransferase superfamily. rRNA adenine N(6)-methyltransferase family. RsmA subfamily.

It is found in the cytoplasm. The enzyme catalyses adenosine(1518)/adenosine(1519) in 16S rRNA + 4 S-adenosyl-L-methionine = N(6)-dimethyladenosine(1518)/N(6)-dimethyladenosine(1519) in 16S rRNA + 4 S-adenosyl-L-homocysteine + 4 H(+). Its function is as follows. Specifically dimethylates two adjacent adenosines (A1518 and A1519) in the loop of a conserved hairpin near the 3'-end of 16S rRNA in the 30S particle. May play a critical role in biogenesis of 30S subunits. The chain is Ribosomal RNA small subunit methyltransferase A from Shewanella oneidensis (strain ATCC 700550 / JCM 31522 / CIP 106686 / LMG 19005 / NCIMB 14063 / MR-1).